We begin with the raw amino-acid sequence, 62 residues long: Disintegrin atropoimin (62 aa).

The 62-residue stretch at 1 to 62 (EAGEECDCGT…ADCPRNGLYG (62 aa)) folds into the Disintegrin domain. 5 disulfide bridges follow: Cys-6–Cys-21, Cys-8–Cys-16, Cys-15–Cys-38, Cys-29–Cys-35, and Cys-34–Cys-48. Residues 41–42 (GD) carry the Cell attachment site motif.

Belongs to the venom metalloproteinase (M12B) family. P-II subfamily. P-IIa sub-subfamily. In terms of assembly, monomer. Expressed by the venom gland.

It localises to the secreted. Its function is as follows. Inhibits ADP- (IC(50)=63 nM) and collagen-induced (IC(50)=53 nM) aggregation of human platelets. In vitro, inhibits adhesion of endothelial cells to vitronectin, type-I collagen and, to a lower degree, fibronectin and laminin. In Metlapilcoatlus mexicanus (Central American jumping pitviper), this protein is Disintegrin atropoimin.